The primary structure comprises 492 residues: KAT8 regulatory NSL complex subunit 2 (492 aa).

A Glycyl lysine isopeptide (Lys-Gly) (interchain with G-Cter in SUMO2) cross-link involves residue K78. The tract at residues 126–182 (ELGSQTPESSRSEASRILDEDSWSDGEQEPITVDQTWRGDPDSEADSIDRDQEDPLK) is disordered. Residue T131 is modified to Phosphothreonine. The segment covering 135–144 (SRSEASRILD) has biased composition (basic and acidic residues). Phosphoserine occurs at positions 147, 149, 168, and 172. Over residues 162-182 (WRGDPDSEADSIDRDQEDPLK) the composition is skewed to basic and acidic residues. Residues 308–364 (DVRCSNQSLPMTRHCLTHICQDTNRVLFKCCQGSEEVPCNKPVPVSLSEDPCCPLHF) form a required for interaction with other NSL complex members region. A disordered region spans residues 453 to 492 (QMAGDGCRSQGPRNSEKAPAPLSQSGIATANGKPEPTSVS).

In terms of assembly, component of the NSL complex at least composed of KAT8/MOF, KANSL1, KANSL2, KANSL3, MCRS1, PHF20, OGT1/OGT, WDR5 and HCFC1. As to expression, ubiquitously expressed.

It is found in the nucleus. The protein localises to the mitochondrion. Its function is as follows. Non-catalytic component of the NSL histone acetyltransferase complex, a multiprotein complex that mediates histone H4 acetylation at 'Lys-5'- and 'Lys-8' (H4K5ac and H4K8ac) at transcription start sites and promotes transcription initiation. Required for NSL complex stability and for transcription of intraciliary transport genes in both ciliated and non-ciliated cells by regulating histone H4 acetylation at 'Lys-5'- and 'Lys-12' (H4K5ac and H4K12ac). This is necessary for cilium assembly in ciliated cells and for organization of the microtubule cytoskeleton in non-ciliated cells. Required within the NSL complex to maintain nuclear architecture stability by promoting KAT8-mediated acetylation of lamin LMNA. The protein is KAT8 regulatory NSL complex subunit 2 (KANSL2) of Capra hircus (Goat).